A 386-amino-acid chain; its full sequence is 2-isopropylmalate synthase (386 aa).

The Pyruvate carboxyltransferase domain maps to 12-265 (VRIFDTTLRD…EVNIKTYKLY (254 aa)). A divalent metal cation is bound by residues Asp21, His203, His205, and Asn239.

It belongs to the alpha-IPM synthase/homocitrate synthase family. Homodimer. A divalent metal cation is required as a cofactor.

The enzyme catalyses 3-methyl-2-oxobutanoate + acetyl-CoA + H2O = (2S)-2-isopropylmalate + CoA + H(+). It functions in the pathway amino-acid biosynthesis; L-leucine biosynthesis; L-leucine from 3-methyl-2-oxobutanoate: step 1/4. Catalyzes the condensation of the acetyl group of acetyl-CoA with 3-methyl-2-oxobutanoate (2-oxoisovalerate) to form 3-carboxy-3-hydroxy-4-methylpentanoate (2-isopropylmalate). Carries out the first step of the leucine biosynthesis pathway. This chain is 2-isopropylmalate synthase (leuA), found in Sulfurisphaera tokodaii (strain DSM 16993 / JCM 10545 / NBRC 100140 / 7) (Sulfolobus tokodaii).